A 337-amino-acid chain; its full sequence is Probable dual-specificity RNA methyltransferase RlmN (337 aa).

Glu-88 serves as the catalytic Proton acceptor. A Radical SAM core domain is found at 94 to 322 (SSDRLTVCVS…ASIRRSRGLD (229 aa)). Cys-101 and Cys-327 form a disulfide bridge. The [4Fe-4S] cluster site is built by Cys-108, Cys-112, and Cys-115. S-adenosyl-L-methionine-binding positions include 155 to 156 (GE), Ser-185, 208 to 210 (SLH), and Asn-284. Cys-327 acts as the S-methylcysteine intermediate in catalysis.

It belongs to the radical SAM superfamily. RlmN family. [4Fe-4S] cluster is required as a cofactor.

Its subcellular location is the cytoplasm. The enzyme catalyses adenosine(2503) in 23S rRNA + 2 reduced [2Fe-2S]-[ferredoxin] + 2 S-adenosyl-L-methionine = 2-methyladenosine(2503) in 23S rRNA + 5'-deoxyadenosine + L-methionine + 2 oxidized [2Fe-2S]-[ferredoxin] + S-adenosyl-L-homocysteine. The catalysed reaction is adenosine(37) in tRNA + 2 reduced [2Fe-2S]-[ferredoxin] + 2 S-adenosyl-L-methionine = 2-methyladenosine(37) in tRNA + 5'-deoxyadenosine + L-methionine + 2 oxidized [2Fe-2S]-[ferredoxin] + S-adenosyl-L-homocysteine. Specifically methylates position 2 of adenine 2503 in 23S rRNA and position 2 of adenine 37 in tRNAs. In Thermosynechococcus vestitus (strain NIES-2133 / IAM M-273 / BP-1), this protein is Probable dual-specificity RNA methyltransferase RlmN.